A 299-amino-acid chain; its full sequence is Tyrosine recombinase XerC (299 aa).

The Core-binding (CB) domain occupies 1 to 85; that stretch reads MDQHLDAYCM…AVRGFYKYLN (85 aa). Positions 106-285 constitute a Tyr recombinase domain; the sequence is RLPKTLDTDR…DFQHLATVYD (180 aa). Catalysis depends on residues Arg-146, Lys-170, His-237, Arg-240, and His-263. Tyr-272 acts as the O-(3'-phospho-DNA)-tyrosine intermediate in catalysis.

The protein belongs to the 'phage' integrase family. XerC subfamily. As to quaternary structure, forms a cyclic heterotetrameric complex composed of two molecules of XerC and two molecules of XerD.

The protein resides in the cytoplasm. Functionally, site-specific tyrosine recombinase, which acts by catalyzing the cutting and rejoining of the recombining DNA molecules. The XerC-XerD complex is essential to convert dimers of the bacterial chromosome into monomers to permit their segregation at cell division. It also contributes to the segregational stability of plasmids. The sequence is that of Tyrosine recombinase XerC from Pseudomonas syringae pv. syringae (strain B728a).